Consider the following 361-residue polypeptide: MTVSTAQMRFWSPEVRELEPYVPGEQPKIQNLLKLNTNENPYPPSPKVVEAVQAVLHEQADALRLYPDPDATALKQAIAKQQNIDVSQVFVGNGSDEVLAHIFKAFFLQDEPILYPDITYSFYPVYSQFFGTKTKEIPLNENFEIDVRDYTQPNGGVIITNPNAPTSIALSLAEIEQVLQANPDCVVVIDEAYVDFGAESAVSLINRYENLVVCQTTSKSRSLAGLRVGFAIAQSHLIAALEAVKNSFNSYPIDRFAIAAAVASFEDQAYFEEQCQKVITSREKLVRDLTELGFNVLPSKANFIFATHSQHDAGQLAQKLREQGIIVRYFNKPRINQFLRITVGTDEQNARLVQTLKQDIL.

Residue K219 is modified to N6-(pyridoxal phosphate)lysine.

This sequence belongs to the class-II pyridoxal-phosphate-dependent aminotransferase family. Histidinol-phosphate aminotransferase subfamily. As to quaternary structure, homodimer. Pyridoxal 5'-phosphate serves as cofactor.

It catalyses the reaction L-histidinol phosphate + 2-oxoglutarate = 3-(imidazol-4-yl)-2-oxopropyl phosphate + L-glutamate. The protein operates within amino-acid biosynthesis; L-histidine biosynthesis; L-histidine from 5-phospho-alpha-D-ribose 1-diphosphate: step 7/9. This Acinetobacter baumannii (strain SDF) protein is Histidinol-phosphate aminotransferase.